Consider the following 614-residue polypeptide: V-type proton ATPase catalytic subunit A (614 aa).

247 to 254 is a binding site for ATP; that stretch reads GAFGCGKT.

It belongs to the ATPase alpha/beta chains family. In terms of assembly, V-ATPase is a heteromultimeric enzyme made up of two complexes: the ATP-hydrolytic V1 complex and the proton translocation V0 complex. The V1 complex consists of three catalytic AB heterodimers that form a heterohexamer, three peripheral stalks each consisting of EG heterodimers, one central rotor including subunits D and F, and the regulatory subunits C and H. The proton translocation complex V0 consists of the proton transport subunit a, a ring of proteolipid subunits c9c'', rotary subunit d, subunits e and f, and the accessory subunits VhaAC45 and ATP6AP2.

It catalyses the reaction ATP + H2O + 4 H(+)(in) = ADP + phosphate + 5 H(+)(out). With respect to regulation, ATP hydrolysis occurs at the interface between the nucleotide-binding domains of subunits A and B. ATP hydrolysis triggers a conformational change in the subunits D and F, which induces a shift of subunit d. The c-ring is subsequently rotated and results in a continuous proton translocation across the membrane. In terms of biological role, catalytic subunit of the V1 complex of vacuolar(H+)-ATPase (V-ATPase), a multisubunit enzyme composed of a peripheral complex (V1) that hydrolyzes ATP and a membrane integral complex (V0) that translocates protons. V-ATPase is responsible for acidifying and maintaining the pH of intracellular compartments and in some cell types, is targeted to the plasma membrane, where it is responsible for acidifying the extracellular environment. In Aedes aegypti (Yellowfever mosquito), this protein is V-type proton ATPase catalytic subunit A (VhaA).